Consider the following 109-residue polypeptide: uncharacterized protein (109 aa).

Transmembrane regions (helical) follow at residues 18-38 (TTLA…LLTL) and 48-68 (AGLI…VIAL).

The protein resides in the cell membrane. This is an uncharacterized protein from Mycobacterium tuberculosis (strain CDC 1551 / Oshkosh).